Reading from the N-terminus, the 700-residue chain is Mitogen-activated protein kinase 9 (700 aa).

Residues 107–398 (YRIQEVIGKG…AEEALTDPYF (292 aa)) form the Protein kinase domain. ATP contacts are provided by residues 113–121 (IGKGSYGVV) and Lys136. Residue Asp233 is the Proton acceptor of the active site. Thr269 carries the phosphothreonine modification. Residues 269 to 271 (TDY) carry the TXY motif. Residue Tyr271 is modified to Phosphotyrosine. The disordered stretch occupies residues 475–523 (EESNGSGSAIPMERKHASLPRSTTVHSTPIPPKEQPLAASLKSSRPVSD).

Belongs to the protein kinase superfamily. CMGC Ser/Thr protein kinase family. MAP kinase subfamily. In terms of processing, dually phosphorylated on Thr-269 and Tyr-271, which activates the enzyme.

It carries out the reaction L-seryl-[protein] + ATP = O-phospho-L-seryl-[protein] + ADP + H(+). It catalyses the reaction L-threonyl-[protein] + ATP = O-phospho-L-threonyl-[protein] + ADP + H(+). Its activity is regulated as follows. Activated by threonine and tyrosine phosphorylation. This chain is Mitogen-activated protein kinase 9 (MPK9), found in Oryza sativa subsp. japonica (Rice).